The primary structure comprises 296 residues: Ribosomal RNA small subunit methyltransferase H (296 aa).

Residues 30 to 32 (GGH), Asp-49, Phe-76, Asp-97, and Gln-104 each bind S-adenosyl-L-methionine.

It belongs to the methyltransferase superfamily. RsmH family.

The protein resides in the cytoplasm. It carries out the reaction cytidine(1402) in 16S rRNA + S-adenosyl-L-methionine = N(4)-methylcytidine(1402) in 16S rRNA + S-adenosyl-L-homocysteine + H(+). Functionally, specifically methylates the N4 position of cytidine in position 1402 (C1402) of 16S rRNA. The sequence is that of Ribosomal RNA small subunit methyltransferase H from Mesomycoplasma hyopneumoniae (strain 7448) (Mycoplasma hyopneumoniae).